A 427-amino-acid polypeptide reads, in one-letter code: Enolase (427 aa).

Q164 is a (2R)-2-phosphoglycerate binding site. E206 (proton donor) is an active-site residue. 3 residues coordinate Mg(2+): D243, E284, and D311. The (2R)-2-phosphoglycerate site is built by K336, R365, S366, and K387. K336 acts as the Proton acceptor in catalysis.

The protein belongs to the enolase family. Mg(2+) is required as a cofactor.

Its subcellular location is the cytoplasm. It localises to the secreted. The protein localises to the cell surface. The catalysed reaction is (2R)-2-phosphoglycerate = phosphoenolpyruvate + H2O. It participates in carbohydrate degradation; glycolysis; pyruvate from D-glyceraldehyde 3-phosphate: step 4/5. Catalyzes the reversible conversion of 2-phosphoglycerate (2-PG) into phosphoenolpyruvate (PEP). It is essential for the degradation of carbohydrates via glycolysis. In Synechococcus sp. (strain JA-2-3B'a(2-13)) (Cyanobacteria bacterium Yellowstone B-Prime), this protein is Enolase.